Here is a 362-residue protein sequence, read N- to C-terminus: Heat-inducible transcription repressor HrcA (362 aa).

It belongs to the HrcA family.

Negative regulator of class I heat shock genes (grpE-dnaK-dnaJ and groELS operons). Prevents heat-shock induction of these operons. This chain is Heat-inducible transcription repressor HrcA, found in Bradyrhizobium sp. (strain BTAi1 / ATCC BAA-1182).